A 273-amino-acid chain; its full sequence is Nitrogenase iron protein (273 aa).

8-15 (GKGGIGKS) is a binding site for ATP. Residue cysteine 95 participates in [4Fe-4S] cluster binding. Arginine 98 is modified (ADP-ribosylarginine; by dinitrogenase reductase ADP-ribosyltransferase). Cysteine 130 lines the [4Fe-4S] cluster pocket.

It belongs to the NifH/BchL/ChlL family. In terms of assembly, homodimer. Requires [4Fe-4S] cluster as cofactor. Post-translationally, the reversible ADP-ribosylation of Arg-98 inactivates the nitrogenase reductase and regulates nitrogenase activity.

The enzyme catalyses N2 + 8 reduced [2Fe-2S]-[ferredoxin] + 16 ATP + 16 H2O = H2 + 8 oxidized [2Fe-2S]-[ferredoxin] + 2 NH4(+) + 16 ADP + 16 phosphate + 6 H(+). In terms of biological role, the key enzymatic reactions in nitrogen fixation are catalyzed by the nitrogenase complex, which has 2 components: the iron protein and the molybdenum-iron protein. The protein is Nitrogenase iron protein of Roseiflexus castenholzii (strain DSM 13941 / HLO8).